A 74-amino-acid chain; its full sequence is MLVFYALLFVTVFSNTVMGATIDKPIPKPILREAIEEIEVNKRAQNHYCKEHNCPPGKHCPKVPIACVYGPCCF.

Residues 1 to 19 (MLVFYALLFVTVFSNTVMG) form the signal peptide. A propeptide spanning residues 20 to 41 (ATIDKPIPKPILREAIEEIEVN) is cleaved from the precursor.

Belongs to the scoloptoxin-07 family. Post-translationally, contains 3 disulfide bonds. In terms of tissue distribution, expressed by the venom gland.

Its subcellular location is the secreted. Its function is as follows. Toxin that inhibits voltage-gated potassium channel currents in DRG neurons (IC(50)=about 570 nM). In vivo, induces neurotoxicity shown by twitching, paralysis, and body contraction. In vivo, insects injected with this toxin showed signs of neurotoxicity including twitching, paralysis, and body contraction. In Scolopendra mutilans (Chinese red-headed centipede), this protein is Kappa-scoloptoxin(07)-Ssm2a.